A 133-amino-acid chain; its full sequence is DNA-directed RNA polymerases I and III subunit RPAC2 (133 aa).

Met-1 bears the N-acetylmethionine mark.

It belongs to the archaeal Rpo11/eukaryotic RPB11/RPC19 RNA polymerase subunit family. In terms of assembly, component of the RNA polymerase I and RNA polymerase III complexes consisting of at least 13 and 17 subunits, respectively. Pol I complex consists of a ten-subunit catalytic core composed of POLR1A/RPA1, POLR1B/RPA2, POLR1C/RPAC1, POLR1D/RPAC2, POLR1H/RPA12, POLR2E/RPABC1, POLR2F/RPABC2, POLR2H/RPABC3, POLR2K/RPABC4 and POLR2L/RPABC5; a mobile stalk subunit POLR1F/RPA43 protruding from the core and additional subunits homologous to general transcription factors POLR1E/RPA49 and POLR1G/RPA34. Part of Pol I pre-initiation complex (PIC), in which Pol I core assembles with RRN3 and promoter-bound UTBF and SL1/TIF-IB complex. Pol III complex consists of a ten-subunit catalytic core composed of POLR3A/RPC1, POLR3B/RPC2, POLR1C/RPAC1, POLR1D/RPAC2, POLR3K/RPC10, POLR2E/RPABC1, POLR2F/RPABC2, POLR2H/RPABC3, POLR2K/RPABC4 and POLR2L/RPABC5; a mobile stalk composed of two subunits POLR3H/RPC8 and CRCP/RPC9, protruding from the core and functioning primarily in transcription initiation; and additional subunits homologous to general transcription factors of the RNA polymerase II machinery, POLR3C/RPC3-POLR3F/RPC6-POLR3G/RPC7 heterotrimer required for transcription initiation and POLR3D/RPC4-POLR3E/RPC5 heterodimer involved in both transcription initiation and termination.

The protein localises to the nucleus. Its subcellular location is the nucleolus. In terms of biological role, DNA-dependent RNA polymerase catalyzes the transcription of DNA into RNA using the four ribonucleoside triphosphates as substrates. Common component of RNA polymerases I and III which synthesize ribosomal RNA precursors and short non-coding RNAs including 5S rRNA, snRNAs, tRNAs and miRNAs, respectively. In Homo sapiens (Human), this protein is DNA-directed RNA polymerases I and III subunit RPAC2.